Here is a 348-residue protein sequence, read N- to C-terminus: Heat-inducible transcription repressor HrcA (348 aa).

This sequence belongs to the HrcA family.

In terms of biological role, negative regulator of class I heat shock genes (grpE-dnaK-dnaJ and groELS operons). Prevents heat-shock induction of these operons. This is Heat-inducible transcription repressor HrcA from Chlorobium chlorochromatii (strain CaD3).